A 344-amino-acid chain; its full sequence is Endoplasmic reticulum junction formation protein lunapark-1 (344 aa).

Topologically, residues 1–39 (MGNLFSRTKSPATELERVVLSIEDFKKRLQTISASNSST) are cytoplasmic. The helical transmembrane segment at 40–60 (LYYYYMGVIIILSIAMAHTWL) threads the bilayer. Topologically, residues 61–68 (RFDDPTKT) are lumenal. Residues 69–89 (YVACALVFGATVIVLTGRYII) form a helical membrane-spanning segment. Topologically, residues 90–344 (NCFFAWRTNR…ADETAVVEKS (255 aa)) are cytoplasmic. Positions 116–140 (DLVKETLKFKEAKEILDRYEEKTEA) form a coiled coil. 2 disordered regions span residues 136-155 (EKTE…HQQK) and 171-192 (QKRV…IAFD). The span at 140-155 (AGNTPTENSKLIHQQK) shows a compositional bias: polar residues. Residues 239-264 (CSICHTHNGMSVPAEYPFISFRCFEC) form a C4-type; plays a role in ER morphology zinc finger. The interval 275 to 344 (PHLPITRPPM…ADETAVVEKS (70 aa)) is disordered. A compositionally biased stretch (polar residues) spans 312–326 (PNPSTDLTPSASQHG). Residues 327 to 344 (SDSEPEKNADETAVVEKS) show a composition bias toward basic and acidic residues.

The protein belongs to the lunapark family.

The protein resides in the endoplasmic reticulum membrane. In terms of biological role, plays a role in tubular endoplasmic reticulum network formation and maintenance. May be involved in central nervous system development. Has a presynaptic role in neurotransmission. Likely to operate in synaptogenesis by regulating vesicular transport or localization. Required for correct localization of rab-3 and snb-1. In Caenorhabditis briggsae, this protein is Endoplasmic reticulum junction formation protein lunapark-1.